The primary structure comprises 446 residues: MITIKRGLDLPIAGTPSQVINDGKTITKVALLGEEYVGMRPTMHVRVGDEVKKAQILFEDKKNPGVKFTSPASGKVIEVNRGAKRVLQSVVIEVAGDEQITFDSFEASQLASIDRQTVKTQLVESGLWTALRTRPFSKVPAIESSTQAIFVTAMDTNPLAAKPETIINEQSEAFVAGLDILSTLTEGKVYVCKSGTSLPRSSQPNVEEHVFDGPHPAGLVGTHMHFLYPVNAVNVAWSINYQDVIAFGQLFLTGELYTQRVVSLAGPVVNKPRLVRTQIGASLEELTDNELMPGEVRVISGSVLSGVKAAGPVAYLGRYHLQVSVLREGRDKDFLGWAMPGKNKFSVTRSFLGHLFTGQLFNMTTTTNGSDRAMVPIGNYEKVLPLDMEPTLLLRDLCAGDIDSAQRLGALELDEEDLALCTFVCPGKYEYGQLLRECLDKIEKEG.

Belongs to the NqrA family. Composed of six subunits; NqrA, NqrB, NqrC, NqrD, NqrE and NqrF.

The enzyme catalyses a ubiquinone + n Na(+)(in) + NADH + H(+) = a ubiquinol + n Na(+)(out) + NAD(+). In terms of biological role, NQR complex catalyzes the reduction of ubiquinone-1 to ubiquinol by two successive reactions, coupled with the transport of Na(+) ions from the cytoplasm to the periplasm. NqrA to NqrE are probably involved in the second step, the conversion of ubisemiquinone to ubiquinol. In Vibrio anguillarum (Listonella anguillarum), this protein is Na(+)-translocating NADH-quinone reductase subunit A.